The following is a 259-amino-acid chain: Imidazole glycerol phosphate synthase subunit HisF (259 aa).

Active-site residues include Asp11 and Asp130.

Belongs to the HisA/HisF family. As to quaternary structure, heterodimer of HisH and HisF.

Its subcellular location is the cytoplasm. The catalysed reaction is 5-[(5-phospho-1-deoxy-D-ribulos-1-ylimino)methylamino]-1-(5-phospho-beta-D-ribosyl)imidazole-4-carboxamide + L-glutamine = D-erythro-1-(imidazol-4-yl)glycerol 3-phosphate + 5-amino-1-(5-phospho-beta-D-ribosyl)imidazole-4-carboxamide + L-glutamate + H(+). The protein operates within amino-acid biosynthesis; L-histidine biosynthesis; L-histidine from 5-phospho-alpha-D-ribose 1-diphosphate: step 5/9. Functionally, IGPS catalyzes the conversion of PRFAR and glutamine to IGP, AICAR and glutamate. The HisF subunit catalyzes the cyclization activity that produces IGP and AICAR from PRFAR using the ammonia provided by the HisH subunit. In Lactococcus lactis subsp. cremoris (strain MG1363), this protein is Imidazole glycerol phosphate synthase subunit HisF.